A 169-amino-acid polypeptide reads, in one-letter code: MQQIEVKRLLVNYKTLEEFRNFREFGAAELSMKDDLEANIIENDSESPFYGIYFGGKLVARMSLYRIDGKYDRYFEPPQDYLELWKLEVLEPYRGKGFGRALVDFAKSFNLPVKTNARQRSNEFWTKMGFEPVTYQTDRDRGESPYVWYPEGVKEQLSEDEGSVETLEN.

An N-acetyltransferase domain is found at 4–160; that stretch reads IEVKRLLVNY…EGVKEQLSED (157 aa).

This is an uncharacterized protein from Halalkalibacterium halodurans (strain ATCC BAA-125 / DSM 18197 / FERM 7344 / JCM 9153 / C-125) (Bacillus halodurans).